The following is a 589-amino-acid chain: Kelch-like protein 25 (589 aa).

One can recognise a BTB domain in the interval 46 to 114; it reads TDVTLWAGNR…AYSSKIIINE (69 aa). The region spanning 149–250 is the BACK domain; sequence CLGMMILSDA…LPSELLKEAV (102 aa). Kelch repeat units follow at residues 296-340, 341-388, 389-444, 446-492, 493-538, and 539-585; these read TLLI…AIGC, KVYV…ELEN, CLYV…SAKL, LFAF…VLGS, QIFI…ASGN, and KVYV…STWK.

In terms of assembly, component of the BCR(KLHL25) E3 ubiquitin ligase complex, at least composed of cul3, klhl25 and rbx1.

It functions in the pathway protein modification; protein ubiquitination. Its function is as follows. Substrate-specific adapter of a BCR (BTB-CUL3-RBX1) E3 ubiquitin ligase complex involved in various processes, such as translation homeostasis and lipid synthesis. The BCR(KLHL25) ubiquitin ligase complex acts by mediating ubiquitination of hypophosphorylated eif4ebp1 (4E-BP1): ubiquitination and subsequent degradation of hypophosphorylated EIF4EBP1 (4E-BP1) probably serves as a homeostatic mechanism to maintain translation and prevent eIF4E inhibition when eIF4E levels are low. The BCR(KLHL25) complex also acts as a regulator of lipid synthesis by mediating ubiquitination and degradation of ACLY, thereby inhibiting lipid synthesis. This chain is Kelch-like protein 25, found in Xenopus tropicalis (Western clawed frog).